We begin with the raw amino-acid sequence, 1277 residues long: Myosin-1 (1277 aa).

The span at 1-13 shows a compositional bias: basic residues; sequence MAPSKKAGKKVTP. Residues 1 to 27 form a disordered region; sequence MAPSKKAGKKVTPKKAAGNNAKSKVAK. The region spanning 39 to 718 is the Myosin motor domain; sequence VGVTDMTLLT…TLFALETMRD (680 aa). 132–139 is a binding site for ATP; that stretch reads GESGAGKT. At serine 360 the chain carries Phosphoserine. Residues 407 to 489 form an actin-binding region; sequence IIGILDIFGF…PGIFAALNDA (83 aa). A disordered region spans residues 567–587; the sequence is LFPDRPDPNSKKRPPTASDRI. IQ domains are found at residues 722 to 742 and 743 to 768; these read HNMA…KHEC and ARRI…YGHQ. A TH1 domain is found at 776–965; that stretch reads RRRFSLLSYR…TVHVPSGEPA (190 aa). Disordered stretches follow at residues 952-1072 and 1129-1259; these read YKSH…AEPE and PKAA…GPGQ. Residues 1015-1056 are compositionally biased toward low complexity; it reads PAVATPSVVSTPAAAAVVSKPKPAASTPAAVRAPAVTPAARS. Pro residues predominate over residues 1057-1068; sequence VPPPPPPPPPAR. The SH3 domain maps to 1071–1129; it reads PEKEMYRAKFDFQGQEGEMSLTKDDEVELIEKDENGWWLVKKDGVEAWAPYNYLERIAP. A compositionally biased stretch (pro residues) spans 1132 to 1142; sequence APAPPPPPARP. Polar residues-rich tracts occupy residues 1145–1159 and 1185–1197; these read TSTV…TTAD and AATT…SSRP. The segment covering 1204–1224 has biased composition (pro residues); that stretch reads VPPPVAAKPKPPVVAPKPGVP. Low complexity predominate over residues 1226 to 1240; sequence PGGKPALPTTARPAP. Positions 1241–1258 are enriched in gly residues; sequence SGGGAAAGRLGGGGGGPG.

This sequence belongs to the TRAFAC class myosin-kinesin ATPase superfamily. Myosin family. Phosphorylation of the TEDS site (Ser-360) is required for the polarization of the actin cytoskeleton. Phosphorylation probably activates the myosin-I ATPase activity.

Its subcellular location is the cytoplasm. The protein resides in the cytoskeleton. It localises to the actin patch. In terms of biological role, type-I myosin implicated in the organization of the actin cytoskeleton. Required for proper actin cytoskeleton polarization. At the cell cortex, assembles in patch-like structures together with proteins from the actin-polymerizing machinery and promotes actin assembly. Functions as actin nucleation-promoting factor (NPF) for the Arp2/3 complex. The polypeptide is Myosin-1 (MYO1) (Coprinopsis cinerea (strain Okayama-7 / 130 / ATCC MYA-4618 / FGSC 9003) (Inky cap fungus)).